Consider the following 184-residue polypeptide: MKKNLTNIYLIGPMGAGKTSVGSQLAKLTKRILYDSDKEIEKRTGADIAWIFEMEGEAGFRRREREMIEALCKLDNIILATGGGVVLDEKNRQQISETGVVIYLTASIDTQLKRIGQKGEMRRPLFIKNNSKEKLQQLNEIRKPLYQAMADLVYPTDDLNPRQLATQILVDIKQTYQTYENRTR.

Residue 15-20 (GAGKTS) participates in ATP binding. Thr-19 lines the Mg(2+) pocket. Asp-37, Arg-61, and Gly-83 together coordinate substrate. Residue Arg-123 coordinates ATP. Arg-142 serves as a coordination point for substrate.

The protein belongs to the shikimate kinase family. In terms of assembly, monomer. Mg(2+) serves as cofactor.

The protein localises to the cytoplasm. It catalyses the reaction shikimate + ATP = 3-phosphoshikimate + ADP + H(+). It functions in the pathway metabolic intermediate biosynthesis; chorismate biosynthesis; chorismate from D-erythrose 4-phosphate and phosphoenolpyruvate: step 5/7. Functionally, catalyzes the specific phosphorylation of the 3-hydroxyl group of shikimic acid using ATP as a cosubstrate. The sequence is that of Shikimate kinase from Coxiella burnetii (strain CbuK_Q154) (Coxiella burnetii (strain Q154)).